The primary structure comprises 234 residues: 2,3,4,5-tetrahydropyridine-2,6-dicarboxylate N-acetyltransferase (234 aa).

Belongs to the transferase hexapeptide repeat family. DapH subfamily.

The enzyme catalyses (S)-2,3,4,5-tetrahydrodipicolinate + acetyl-CoA + H2O = L-2-acetamido-6-oxoheptanedioate + CoA. It participates in amino-acid biosynthesis; L-lysine biosynthesis via DAP pathway; LL-2,6-diaminopimelate from (S)-tetrahydrodipicolinate (acetylase route): step 1/3. Its function is as follows. Catalyzes the transfer of an acetyl group from acetyl-CoA to tetrahydrodipicolinate. This Lacticaseibacillus paracasei (strain ATCC 334 / BCRC 17002 / CCUG 31169 / CIP 107868 / KCTC 3260 / NRRL B-441) (Lactobacillus paracasei) protein is 2,3,4,5-tetrahydropyridine-2,6-dicarboxylate N-acetyltransferase.